Here is a 121-residue protein sequence, read N- to C-terminus: Oxalate-binding protein (121 aa).

The Cupin type-2 domain maps to 49–117 (RMKLPPGSSV…GNTDLEFLAV (69 aa)). Mn(2+) is bound by residues His61, His63, and Glu68. Residue Tyr70 participates in oxalate binding. Position 102 (His102) interacts with Mn(2+).

Homodimer.

In terms of biological role, binds oxalate. This is Oxalate-binding protein from Thermotoga maritima (strain ATCC 43589 / DSM 3109 / JCM 10099 / NBRC 100826 / MSB8).